The primary structure comprises 469 residues: MSDDLSMKCGLEIHVQVDTNSKLFCKCPTNYKDVFPNTNICPVCIGHPGAKPMPPNKKAFDIAIMVAKMLNCEMITDKDIYFQRKHYNYPDLPSGYQRTSVPIGEKGNFLGVGITEVHLEEDPGQYKPDLGTVDYNRSGTPLIEIVTDPDMKSPEEAREFLRQLMRLFRYIGNLRGEGTMRADTNISINYNGIQGKRVEVKNVNSIKGVYKVLKYEIIRQKNILRRGGEIKMETRAFMESQMITKSMRSKETADDYRYIPDPDLQPIVLDNSWIERVESEMPETPISKEKRFVEQYGIKEDDSKVLVSDLDLADVFERVIKDVGSDETGISLAVTWVRNELKRVLVYNKIDFFESNLKPEHIIELINSIKDRTISQKIGKTVIEHMVDQKGEKTPKELITELGLTVIEDVSELDQACEEAIKNSEKAIEDYKSGNIRALNSVVGQVMKLTKGRAEPGTVVEMLKKKIDG.

The protein belongs to the GatB/GatE family. GatB subfamily. Heterotrimer of A, B and C subunits.

It carries out the reaction L-glutamyl-tRNA(Gln) + L-glutamine + ATP + H2O = L-glutaminyl-tRNA(Gln) + L-glutamate + ADP + phosphate + H(+). The enzyme catalyses L-aspartyl-tRNA(Asn) + L-glutamine + ATP + H2O = L-asparaginyl-tRNA(Asn) + L-glutamate + ADP + phosphate + 2 H(+). Its function is as follows. Allows the formation of correctly charged Asn-tRNA(Asn) or Gln-tRNA(Gln) through the transamidation of misacylated Asp-tRNA(Asn) or Glu-tRNA(Gln) in organisms which lack either or both of asparaginyl-tRNA or glutaminyl-tRNA synthetases. The reaction takes place in the presence of glutamine and ATP through an activated phospho-Asp-tRNA(Asn) or phospho-Glu-tRNA(Gln). The protein is Aspartyl/glutamyl-tRNA(Asn/Gln) amidotransferase subunit B of Methanococcus vannielii (strain ATCC 35089 / DSM 1224 / JCM 13029 / OCM 148 / SB).